We begin with the raw amino-acid sequence, 358 residues long: Photosystem II protein D1 (358 aa).

A run of 3 helical transmembrane segments spans residues 28–45 (YVGWFGVLMVPTLLAAAI), 117–132 (HFLIGICCWLGRQWEL), and 141–155 (WICVAYSAPLSAAFA). His117 provides a ligand contact to chlorophyll a. Trp125 lines the pheophytin a pocket. Asp169 and Glu188 together coordinate [CaMn4O5] cluster. A helical transmembrane segment spans residues 196–217 (FHMIGVAGMFGGSLFSAMHGSL). Chlorophyll a is bound at residue His197. Residues His214 and 263–264 (SF) each bind a quinone. His214 is a binding site for Fe cation. His271 provides a ligand contact to Fe cation. Residues 273-287 (FLAAWPVICIWITSL) form a helical membrane-spanning segment. [CaMn4O5] cluster is bound by residues His331, Glu332, Asp341, and Ala343. Positions 344–358 (AAESTPVALIAPAIG) are excised as a propeptide.

This sequence belongs to the reaction center PufL/M/PsbA/D family. In terms of assembly, PSII is composed of 1 copy each of membrane proteins PsbA, PsbB, PsbC, PsbD, PsbE, PsbF, PsbH, PsbI, PsbJ, PsbK, PsbL, PsbM, PsbT, PsbX, PsbY, Psb30/Ycf12, peripheral proteins PsbO, CyanoQ (PsbQ), PsbU, PsbV and a large number of cofactors. It forms dimeric complexes. It depends on The D1/D2 heterodimer binds P680, chlorophylls that are the primary electron donor of PSII, and subsequent electron acceptors. It shares a non-heme iron and each subunit binds pheophytin, quinone, additional chlorophylls, carotenoids and lipids. D1 provides most of the ligands for the Mn4-Ca-O5 cluster of the oxygen-evolving complex (OEC). There is also a Cl(-1) ion associated with D1 and D2, which is required for oxygen evolution. The PSII complex binds additional chlorophylls, carotenoids and specific lipids. as a cofactor. Post-translationally, tyr-160 forms a radical intermediate that is referred to as redox-active TyrZ, YZ or Y-Z. C-terminally processed by CtpA; processing is essential to allow assembly of the oxygen-evolving complex and thus photosynthetic growth.

It localises to the cellular thylakoid membrane. It carries out the reaction 2 a plastoquinone + 4 hnu + 2 H2O = 2 a plastoquinol + O2. In terms of biological role, photosystem II (PSII) is a light-driven water:plastoquinone oxidoreductase that uses light energy to abstract electrons from H(2)O, generating O(2) and a proton gradient subsequently used for ATP formation. It consists of a core antenna complex that captures photons, and an electron transfer chain that converts photonic excitation into a charge separation. The D1/D2 (PsbA/PsbD) reaction center heterodimer binds P680, the primary electron donor of PSII as well as several subsequent electron acceptors. This Prochlorococcus marinus (strain MIT 9303) protein is Photosystem II protein D1.